The primary structure comprises 285 residues: NADPH-dependent 7-cyano-7-deazaguanine reductase (285 aa).

Residue 80–82 (VES) coordinates substrate. Residue 82 to 83 (SK) participates in NADPH binding. Catalysis depends on cysteine 191, which acts as the Thioimide intermediate. The Proton donor role is filled by aspartate 198. Substrate is bound at residue 231-232 (HE). An NADPH-binding site is contributed by 260–261 (RG).

The protein belongs to the GTP cyclohydrolase I family. QueF type 2 subfamily. As to quaternary structure, homodimer.

It is found in the cytoplasm. It catalyses the reaction 7-aminomethyl-7-carbaguanine + 2 NADP(+) = 7-cyano-7-deazaguanine + 2 NADPH + 3 H(+). It participates in tRNA modification; tRNA-queuosine biosynthesis. Its function is as follows. Catalyzes the NADPH-dependent reduction of 7-cyano-7-deazaguanine (preQ0) to 7-aminomethyl-7-deazaguanine (preQ1). This is NADPH-dependent 7-cyano-7-deazaguanine reductase from Psychrobacter cryohalolentis (strain ATCC BAA-1226 / DSM 17306 / VKM B-2378 / K5).